Consider the following 197-residue polypeptide: Histocompatibility antigen 60c (197 aa).

An N-terminal signal peptide occupies residues 1–17 (MALLLLILESCSAGTYA). 3 N-linked (GlcNAc...) asparagine glycosylation sites follow: N51, N81, and N114. S177 is lipidated: GPI-anchor amidated serine. The propeptide at 178 to 197 (MACKSSPFDGLIMILLIYIL) is removed in mature form.

This sequence belongs to the NKG2D ligand family. In terms of tissue distribution, expressed in skin, and weakly in large intestine.

The protein localises to the cell membrane. Functionally, ligand for the KLRK1 immunosurveillance receptor. Binding to KLRK1 stimulates cell lysis in vitro. The polypeptide is Histocompatibility antigen 60c (Mus musculus (Mouse)).